The chain runs to 104 residues: Toxin-like protein 14 (104 aa).

A signal peptide spans 1–25; that stretch reads MNTYNARLYIFSLALALVILKGTKC.

Post-translationally, contains 4 disulfide bonds. As to expression, expressed by the venom gland.

The protein localises to the secreted. This Urodacus yaschenkoi (Inland robust scorpion) protein is Toxin-like protein 14.